The following is a 556-amino-acid chain: 2-succinyl-5-enolpyruvyl-6-hydroxy-3-cyclohexene-1-carboxylate synthase (556 aa).

Belongs to the TPP enzyme family. MenD subfamily. In terms of assembly, homodimer. It depends on Mg(2+) as a cofactor. The cofactor is Mn(2+). Requires thiamine diphosphate as cofactor.

The catalysed reaction is isochorismate + 2-oxoglutarate + H(+) = 5-enolpyruvoyl-6-hydroxy-2-succinyl-cyclohex-3-ene-1-carboxylate + CO2. Its pathway is quinol/quinone metabolism; 1,4-dihydroxy-2-naphthoate biosynthesis; 1,4-dihydroxy-2-naphthoate from chorismate: step 2/7. The protein operates within quinol/quinone metabolism; menaquinone biosynthesis. In terms of biological role, catalyzes the thiamine diphosphate-dependent decarboxylation of 2-oxoglutarate and the subsequent addition of the resulting succinic semialdehyde-thiamine pyrophosphate anion to isochorismate to yield 2-succinyl-5-enolpyruvyl-6-hydroxy-3-cyclohexene-1-carboxylate (SEPHCHC). The polypeptide is 2-succinyl-5-enolpyruvyl-6-hydroxy-3-cyclohexene-1-carboxylate synthase (Salmonella paratyphi B (strain ATCC BAA-1250 / SPB7)).